Reading from the N-terminus, the 369-residue chain is Ribosomal RNA large subunit methyltransferase M (369 aa).

S-adenosyl-L-methionine is bound by residues serine 198, 231–234 (APGG), aspartate 250, aspartate 270, and aspartate 287. The Proton acceptor role is filled by lysine 316.

This sequence belongs to the class I-like SAM-binding methyltransferase superfamily. RNA methyltransferase RlmE family. RlmM subfamily. In terms of assembly, monomer.

Its subcellular location is the cytoplasm. It carries out the reaction cytidine(2498) in 23S rRNA + S-adenosyl-L-methionine = 2'-O-methylcytidine(2498) in 23S rRNA + S-adenosyl-L-homocysteine + H(+). Its function is as follows. Catalyzes the 2'-O-methylation at nucleotide C2498 in 23S rRNA. In Idiomarina loihiensis (strain ATCC BAA-735 / DSM 15497 / L2-TR), this protein is Ribosomal RNA large subunit methyltransferase M.